We begin with the raw amino-acid sequence, 200 residues long: dITP/XTP pyrophosphatase (200 aa).

Substrate is bound at residue 8–13 (TGNQGK). Catalysis depends on Asp69, which acts as the Proton acceptor. Asp69 serves as a coordination point for Mg(2+). Residues Ser70, 154 to 157 (FGYD), Lys177, and 182 to 183 (HR) each bind substrate.

The protein belongs to the HAM1 NTPase family. In terms of assembly, homodimer. It depends on Mg(2+) as a cofactor.

It catalyses the reaction XTP + H2O = XMP + diphosphate + H(+). The enzyme catalyses dITP + H2O = dIMP + diphosphate + H(+). The catalysed reaction is ITP + H2O = IMP + diphosphate + H(+). Pyrophosphatase that catalyzes the hydrolysis of nucleoside triphosphates to their monophosphate derivatives, with a high preference for the non-canonical purine nucleotides XTP (xanthosine triphosphate), dITP (deoxyinosine triphosphate) and ITP. Seems to function as a house-cleaning enzyme that removes non-canonical purine nucleotides from the nucleotide pool, thus preventing their incorporation into DNA/RNA and avoiding chromosomal lesions. In Vibrio cholerae serotype O1 (strain ATCC 39315 / El Tor Inaba N16961), this protein is dITP/XTP pyrophosphatase.